The sequence spans 126 residues: Arginine decarboxylase proenzyme (126 aa).

Ser-74 functions as the Schiff-base intermediate with substrate; via pyruvic acid in the catalytic mechanism. Pyruvic acid (Ser); by autocatalysis is present on Ser-74. His-79 functions as the Proton acceptor; for processing activity in the catalytic mechanism. Catalysis depends on Cys-94, which acts as the Proton donor; for catalytic activity.

This sequence belongs to the prokaryotic AdoMetDC family. Type 1 subfamily. Heterooctamer of four alpha and four beta chains arranged as a tetramer of alpha/beta heterodimers. Pyruvate serves as cofactor. In terms of processing, is synthesized initially as an inactive proenzyme. Formation of the active enzyme involves a self-maturation process in which the active site pyruvoyl group is generated from an internal serine residue via an autocatalytic post-translational modification. Two non-identical subunits are generated from the proenzyme in this reaction, and the pyruvate is formed at the N-terminus of the alpha chain, which is derived from the carboxyl end of the proenzyme. The post-translation cleavage follows an unusual pathway, termed non-hydrolytic serinolysis, in which the side chain hydroxyl group of the serine supplies its oxygen atom to form the C-terminus of the beta chain, while the remainder of the serine residue undergoes an oxidative deamination to produce ammonia and the pyruvoyl group blocking the N-terminus of the alpha chain.

It catalyses the reaction L-arginine + H(+) = agmatine + CO2. It functions in the pathway amine and polyamine biosynthesis; agmatine biosynthesis; agmatine from L-arginine: step 1/1. Specifically catalyzes the decarboxylation of L-arginine to agmatine. Has no S-adenosylmethionine decarboxylase (AdoMetDC) activity. In Pyrobaculum aerophilum (strain ATCC 51768 / DSM 7523 / JCM 9630 / CIP 104966 / NBRC 100827 / IM2), this protein is Arginine decarboxylase proenzyme.